The sequence spans 359 residues: Type-1 angiotensin II receptor (359 aa).

The Extracellular segment spans residues M1 to N25. N4 carries an N-linked (GlcNAc...) asparagine glycan. Q15 and D17 together coordinate angiotensin II. 2 disulfide bridges follow: C18/C274 and C101/C180. Residues Y26–F55 traverse the membrane as a helical segment. Topologically, residues Y56–T61 are cytoplasmic. Residues V62–A89 form a helical membrane-spanning segment. Residues M90–N98 are Extracellular-facing. Residues Y99 to D125 form a helical membrane-spanning segment. The Cytoplasmic portion of the chain corresponds to R126–T141. The chain crosses the membrane as a helical span at residues M142–I165. Residues H166 to T190 lie on the Extracellular side of the membrane. R167 serves as a coordination point for angiotensin II. N176 is a glycosylation site (N-linked (GlcNAc...) asparagine). Residues F182, H183, and Y184 each contribute to the angiotensin II site. N188 is a glycosylation site (N-linked (GlcNAc...) asparagine). Residues L191–T216 traverse the membrane as a helical segment. K199 serves as a coordination point for angiotensin II. Residues L217 to F239 lie on the Cytoplasmic side of the membrane. The chain crosses the membrane as a helical span at residues K240–L268. The Extracellular segment spans residues G269 to D278. A helical transmembrane segment spans residues I279 to F304. The Cytoplasmic segment spans residues L305–E359. The segment at S326 to E359 is disordered. A compositionally biased stretch (polar residues) spans H327–K351. C355 carries the S-palmitoyl cysteine lipid modification.

It belongs to the G-protein coupled receptor 1 family. In terms of assembly, interacts with MAS1. Interacts with ARRB1. Interacts with FLNA (via filamin repeat 21); increases PKA-mediated phosphorylation of FLNA. Post-translationally, C-terminal Ser or Thr residues may be phosphorylated.

The protein resides in the cell membrane. Receptor for angiotensin II, a vasoconstricting peptide, which acts as a key regulator of blood pressure and sodium retention by the kidney. The activated receptor in turn couples to G-alpha proteins G(q) (GNAQ, GNA11, GNA14 or GNA15) and thus activates phospholipase C and increases the cytosolic Ca(2+) concentrations, which in turn triggers cellular responses such as stimulation of protein kinase C. This Sus scrofa (Pig) protein is Type-1 angiotensin II receptor (AGTR1).